We begin with the raw amino-acid sequence, 190 residues long: dCTP deaminase, dUMP-forming (190 aa).

DCTP contacts are provided by residues 101–106 (KSSLGR), Asp119, 127–129 (TLE), Gln148, Tyr162, Lys170, and Gln174. The Proton donor/acceptor role is filled by Glu129. Positions 160 to 190 (HPYGSSRAGSKYQGQRGPTPSRSYQNFIRST) are disordered. Over residues 171–190 (YQGQRGPTPSRSYQNFIRST) the composition is skewed to polar residues.

This sequence belongs to the dCTP deaminase family. Homotrimer.

It carries out the reaction dCTP + 2 H2O = dUMP + NH4(+) + diphosphate. It participates in pyrimidine metabolism; dUMP biosynthesis; dUMP from dCTP: step 1/1. Its function is as follows. Bifunctional enzyme that catalyzes both the deamination of dCTP to dUTP and the hydrolysis of dUTP to dUMP without releasing the toxic dUTP intermediate. The chain is dCTP deaminase, dUMP-forming from Mycobacterium tuberculosis (strain ATCC 25177 / H37Ra).